A 341-amino-acid chain; its full sequence is Guanine nucleotide-binding protein subunit beta (341 aa).

7 WD repeats span residues 54 to 84 (GHLA…IVWD), 96 to 126 (LRSS…SIYS), 142 to 171 (GHTG…ALWD), 183 to 213 (GHTG…KLWD), 225 to 255 (GHES…RLFD), 269 to 299 (NIIC…NVWD), and 311 to 341 (GHDN…KIWN).

Belongs to the WD repeat G protein beta family. In terms of assembly, g proteins are composed of 3 units, alpha, beta and gamma.

Guanine nucleotide-binding proteins (G proteins) are involved as a modulator or transducer in various transmembrane signaling systems. The beta and gamma chains are required for the GTPase activity, for replacement of GDP by GTP, and for G protein-effector interaction. The chain is Guanine nucleotide-binding protein subunit beta from Lymnaea stagnalis (Great pond snail).